Consider the following 360-residue polypeptide: MEKVYNFCAGPAMIPAEVLKKVQEELVNWNGLGTSVMEISHRSKEFLAVAKQSEKDLRELLSIPSNYHVLFCHGGARGQFAAVPMNLLGDANTADYMDGGYWAHSAIAEAKKYCSPNAVDITCEREGKKAILPAREWSLSDDAAFVHFCPNETIDGIEIRDLPETDKPIVADLSSTILSRPIDVSKYGVIYAGAQKNIGPAGLTIVIVRDDLLGKAKQEIPSIFDYTVLVDKESMFNTPPTFAWYLAGEVFKWLKELGGLEAMKQRNDAKAELLYNFIDGSNFYNNDVHVDNRSFMNAPFQLKKPELDSKFLEQADAAGLKALKGHRVVGGMRASIYNAMPIEGVQALVDFMRQFEQKNA.

Position 42 (Arg42) interacts with L-glutamate. Residues 76–77, Trp102, Thr153, Asp172, and Gln195 contribute to the pyridoxal 5'-phosphate site; that span reads AR. Lys196 carries the post-translational modification N6-(pyridoxal phosphate)lysine. 237–238 provides a ligand contact to pyridoxal 5'-phosphate; the sequence is NT.

Belongs to the class-V pyridoxal-phosphate-dependent aminotransferase family. SerC subfamily. Homodimer. Requires pyridoxal 5'-phosphate as cofactor.

The protein resides in the cytoplasm. The catalysed reaction is O-phospho-L-serine + 2-oxoglutarate = 3-phosphooxypyruvate + L-glutamate. It catalyses the reaction 4-(phosphooxy)-L-threonine + 2-oxoglutarate = (R)-3-hydroxy-2-oxo-4-phosphooxybutanoate + L-glutamate. It participates in amino-acid biosynthesis; L-serine biosynthesis; L-serine from 3-phospho-D-glycerate: step 2/3. It functions in the pathway cofactor biosynthesis; pyridoxine 5'-phosphate biosynthesis; pyridoxine 5'-phosphate from D-erythrose 4-phosphate: step 3/5. Catalyzes the reversible conversion of 3-phosphohydroxypyruvate to phosphoserine and of 3-hydroxy-2-oxo-4-phosphonooxybutanoate to phosphohydroxythreonine. This Photobacterium profundum (strain SS9) protein is Phosphoserine aminotransferase.